A 199-amino-acid polypeptide reads, in one-letter code: Small ribosomal subunit protein uS4B (199 aa).

An S4 RNA-binding domain is found at 88-151 (CRLDNLVYRT…RKNKIFIDNF (64 aa)).

It belongs to the universal ribosomal protein uS4 family. In terms of assembly, part of the 30S ribosomal subunit. Contacts protein S5. The interaction surface between S4 and S5 is involved in control of translational fidelity.

Its function is as follows. One of the primary rRNA binding proteins, it binds directly to 16S rRNA where it nucleates assembly of the body of the 30S subunit. With S5 and S12 plays an important role in translational accuracy. This chain is Small ribosomal subunit protein uS4B, found in Alkaliphilus metalliredigens (strain QYMF).